The sequence spans 426 residues: Tyrosine--tRNA ligase (426 aa).

Position 36 (tyrosine 36) interacts with L-tyrosine. A 'HIGH' region motif is present at residues proline 41 to histidine 50. The L-tyrosine site is built by tyrosine 174 and glutamine 178. The 'KMSKS' region motif lies at lysine 234 to serine 238. ATP is bound at residue lysine 237. An S4 RNA-binding domain is found at aspartate 359–glycine 416.

The protein belongs to the class-I aminoacyl-tRNA synthetase family. TyrS type 1 subfamily. Homodimer.

It is found in the cytoplasm. It carries out the reaction tRNA(Tyr) + L-tyrosine + ATP = L-tyrosyl-tRNA(Tyr) + AMP + diphosphate + H(+). Its function is as follows. Catalyzes the attachment of tyrosine to tRNA(Tyr) in a two-step reaction: tyrosine is first activated by ATP to form Tyr-AMP and then transferred to the acceptor end of tRNA(Tyr). The protein is Tyrosine--tRNA ligase of Mycobacterium leprae (strain TN).